Here is a 473-residue protein sequence, read N- to C-terminus: Tryptophanase (473 aa).

K270 carries the post-translational modification N6-(pyridoxal phosphate)lysine.

Belongs to the beta-eliminating lyase family. As to quaternary structure, homotetramer. It depends on pyridoxal 5'-phosphate as a cofactor.

It catalyses the reaction L-tryptophan + H2O = indole + pyruvate + NH4(+). The protein operates within amino-acid degradation; L-tryptophan degradation via pyruvate pathway; indole and pyruvate from L-tryptophan: step 1/1. The polypeptide is Tryptophanase (Vibrio vulnificus (strain CMCP6)).